The following is an 88-amino-acid chain: Large ribosomal subunit protein bL27 (88 aa).

The tract at residues 1 to 23 (MAHKKAGGSSRNGRDSAGRRLGV) is disordered.

This sequence belongs to the bacterial ribosomal protein bL27 family.

In Methylorubrum extorquens (strain CM4 / NCIMB 13688) (Methylobacterium extorquens), this protein is Large ribosomal subunit protein bL27.